We begin with the raw amino-acid sequence, 249 residues long: Seipin homolog (249 aa).

Topologically, residues 1–10 (MGYLVKLFKL) are cytoplasmic. The helical transmembrane segment at 11-31 (VVWMLVIGLFSIPSLVSYVIF) threads the bilayer. Over 32-212 (YDTVIPHSVI…GMRWFMYTHK (181 aa)) the chain is Lumenal. A helical membrane pass occupies residues 213–233 (VSAFLVFTSLFWFTGITSTII). Topologically, residues 234–249 (TYLIVSSTSETKATRR) are cytoplasmic.

The protein belongs to the seipin family.

The protein localises to the endoplasmic reticulum membrane. Involved in lipid metabolism and lipid droplet (LD) morphology, number, and size. Facilitates initiation of LD formation, and ensures that vectorial budding of LDs from the ER is directed towards the cytoplasm. The chain is Seipin homolog from Schizosaccharomyces pombe (strain 972 / ATCC 24843) (Fission yeast).